The chain runs to 309 residues: Ribosomal RNA small subunit methyltransferase H (309 aa).

S-adenosyl-L-methionine is bound by residues 30-32, Asp50, Phe74, Asp96, and Gln103; that span reads GGH.

This sequence belongs to the methyltransferase superfamily. RsmH family.

The protein resides in the cytoplasm. It carries out the reaction cytidine(1402) in 16S rRNA + S-adenosyl-L-methionine = N(4)-methylcytidine(1402) in 16S rRNA + S-adenosyl-L-homocysteine + H(+). Specifically methylates the N4 position of cytidine in position 1402 (C1402) of 16S rRNA. The sequence is that of Ribosomal RNA small subunit methyltransferase H from Wigglesworthia glossinidia brevipalpis.